A 174-amino-acid chain; its full sequence is Co-chaperone protein HscB (174 aa).

Residues 2–74 (DYFTLFGLPA…LKRAEYMLSL (73 aa)) form the J domain.

This sequence belongs to the HscB family. Interacts with HscA and stimulates its ATPase activity. Interacts with IscU.

Co-chaperone involved in the maturation of iron-sulfur cluster-containing proteins. Seems to help targeting proteins to be folded toward HscA. The polypeptide is Co-chaperone protein HscB (Yersinia pseudotuberculosis serotype O:1b (strain IP 31758)).